The primary structure comprises 841 residues: Protein translocase subunit SecA (841 aa).

ATP is bound by residues M79–F80, Q85, G103–T107, and D492. The interval R786–V813 is disordered. The Zn(2+) site is built by C825, C827, C836, and C837.

It belongs to the SecA family. As to quaternary structure, part of the essential Sec protein translocation apparatus which comprises SecA, SecYEG and auxiliary proteins SecDF. Other proteins may be involved. Monomer and many different homodimers can be isolated, some of which are not formed in the presence of a synthetic signal peptide. A single SecA monomer interacts with SecY in the channel. Only shows some colocalization with FloA or FloT membrane assemblies. The cofactor is Zn(2+).

The protein resides in the cell membrane. It localises to the cytoplasm. The protein localises to the membrane raft. The enzyme catalyses ATP + H2O + cellular proteinSide 1 = ADP + phosphate + cellular proteinSide 2.. Its function is as follows. Part of the Sec protein translocase complex. Interacts with the SecYEG preprotein conducting channel. Has a central role in coupling the hydrolysis of ATP to the transfer of proteins into and across the cell membrane, serving as an ATP-driven molecular motor driving the stepwise translocation of polypeptide chains across the membrane. In Bacillus subtilis (strain 168), this protein is Protein translocase subunit SecA.